A 221-amino-acid chain; its full sequence is MEAGGFLDSLIYGACVVFTLGMFSAGLSDLRHMRMTRSVDNVQFLPFLTTEVNNLGWLSYGALKGDGILIVVNTVGAALQTLYILAYLHYCPRKRVVLLQTATLLGVLLLGYGYFWLLVPNPEARLQQLGLFCSVFTISMYLSPLADLAKVIQTKSTQCLSYPLTIATLLTSASWCLYGFRLRDPYIMVSNFPGIVTSFIRFWLFWKYPQEQDRNYWLLQT.

Transmembrane regions (helical) follow at residues 3–23, 42–62, 68–88, 96–116, 129–149, 160–180, and 186–206; these read AGGFLDSLIYGACVVFTLGMF, VQFLPFLTTEVNNLGWLSYGA, ILIVVNTVGAALQTLYILAYL, VVLLQTATLLGVLLLGYGYFW, LGLFCSVFTISMYLSPLADLA, LSYPLTIATLLTSASWCLYGF, and YIMVSNFPGIVTSFIRFWLFW. The 85-residue stretch at 10–94 folds into the MtN3/slv 1 domain; the sequence is LIYGACVVFT…LAYLHYCPRK (85 aa). The MtN3/slv 2 domain maps to 127-212; the sequence is QQLGLFCSVF…WLFWKYPQEQ (86 aa). The segment at 149 to 221 is mediates interaction with TRPV2; the sequence is AKVIQTKSTQ…QDRNYWLLQT (73 aa).

This sequence belongs to the SWEET sugar transporter family. Interacts with TRPV2; the interaction probably occurs intracellularly and depends on TRPV2 N-glycosylation. As to expression, ubiquitously expressed with highest expression in oviduct, epididymis and intestine.

Its subcellular location is the golgi apparatus membrane. It is found in the cell membrane. Mediates sugar transport across membranes. May stimulate V(D)J recombination by the activation of RAG1. The chain is Sugar transporter SWEET1 (SLC50A1) from Homo sapiens (Human).